Here is a 214-residue protein sequence, read N- to C-terminus: UPF0690 protein C1orf52 homolog (214 aa).

Disordered regions lie at residues 1–66 and 81–214; these read MSDE…SVSK and DSRA…QCLD. A compositionally biased stretch (low complexity) spans 32–44; the sequence is PEATASSAPAEPQ. 2 stretches are compositionally biased toward basic and acidic residues: residues 49-61 and 81-97; these read RAAE…DELF and DSRA…EFKV. Over residues 152–165 the composition is skewed to acidic residues; it reads EEEEEEQQPDSDDD. S162 carries the post-translational modification Phosphoserine. Composition is skewed to basic and acidic residues over residues 179–192 and 200–214; these read VETF…KRDI and NFVE…QCLD.

This sequence belongs to the UPF0690 family.

The polypeptide is UPF0690 protein C1orf52 homolog (Danio rerio (Zebrafish)).